Reading from the N-terminus, the 813-residue chain is Lon protease (813 aa).

Positions 30 to 225 (LPILPVRNIV…WLLQLMDKDI (196 aa)) constitute a Lon N-terminal domain. 376-383 (GPPGVGKT) is an ATP binding site. The Lon proteolytic domain maps to 612 to 793 (DDLAGIVTGL…DEVLAIALLK (182 aa)). Active-site residues include Ser699 and Lys742.

This sequence belongs to the peptidase S16 family. In terms of assembly, homohexamer. Organized in a ring with a central cavity.

The protein resides in the cytoplasm. The enzyme catalyses Hydrolysis of proteins in presence of ATP.. ATP-dependent serine protease that mediates the selective degradation of mutant and abnormal proteins as well as certain short-lived regulatory proteins. Required for cellular homeostasis and for survival from DNA damage and developmental changes induced by stress. Degrades polypeptides processively to yield small peptide fragments that are 5 to 10 amino acids long. Binds to DNA in a double-stranded, site-specific manner. The chain is Lon protease from Cytophaga hutchinsonii (strain ATCC 33406 / DSM 1761 / CIP 103989 / NBRC 15051 / NCIMB 9469 / D465).